The chain runs to 124 residues: Small ribosomal subunit protein uS13 (124 aa).

Residues Gly-95–Arg-124 are disordered. Residues Gly-100 to Ser-109 are compositionally biased toward polar residues. Positions Lys-111 to Arg-124 are enriched in basic residues.

Belongs to the universal ribosomal protein uS13 family. As to quaternary structure, part of the 30S ribosomal subunit. Forms a loose heterodimer with protein S19. Forms two bridges to the 50S subunit in the 70S ribosome.

In terms of biological role, located at the top of the head of the 30S subunit, it contacts several helices of the 16S rRNA. In the 70S ribosome it contacts the 23S rRNA (bridge B1a) and protein L5 of the 50S subunit (bridge B1b), connecting the 2 subunits; these bridges are implicated in subunit movement. Contacts the tRNAs in the A and P-sites. The protein is Small ribosomal subunit protein uS13 of Tropheryma whipplei (strain TW08/27) (Whipple's bacillus).